Consider the following 231-residue polypeptide: ATP synthase subunit a (231 aa).

5 helical membrane passes run glycine 14–valine 34, tyrosine 78–isoleucine 98, serine 107–isoleucine 127, methionine 174–leucine 194, and leucine 196–alanine 216.

Belongs to the ATPase A chain family. In terms of assembly, F-type ATPases have 2 components, CF(1) - the catalytic core - and CF(0) - the membrane proton channel. CF(1) has five subunits: alpha(3), beta(3), gamma(1), delta(1), epsilon(1). CF(0) has three main subunits: a(1), b(2) and c(9-12). The alpha and beta chains form an alternating ring which encloses part of the gamma chain. CF(1) is attached to CF(0) by a central stalk formed by the gamma and epsilon chains, while a peripheral stalk is formed by the delta and b chains.

It is found in the cell inner membrane. Key component of the proton channel; it plays a direct role in the translocation of protons across the membrane. The polypeptide is ATP synthase subunit a (Albidiferax ferrireducens (strain ATCC BAA-621 / DSM 15236 / T118) (Rhodoferax ferrireducens)).